The chain runs to 287 residues: Cbb3-type cytochrome c oxidase subunit FixPc (287 aa).

Over 1–36 the chain is Cytoplasmic; sequence MSEKHIDEFSGVETTGHEWDGIRELNNPMPRWWVWT. A helical membrane pass occupies residues 37–57; sequence FYATIVWALGYAIAYPAIPMI. Topologically, residues 58–287 are periplasmic; the sequence is TDATKGMLGF…IFVHSLGGGT (230 aa). Cytochrome c domains follow at residues 108 to 196 and 203 to 284; these read FAIA…WGLT and GLAE…HSLG. Heme c-binding residues include C121, C124, H125, M173, C216, C219, H220, and M261.

The protein belongs to the CcoP / FixP family. In terms of assembly, component of the cbb3-type cytochrome c oxidase at least composed of FixN, FixO, FixQ and FixP. Requires heme c as cofactor.

The protein localises to the cell inner membrane. It participates in energy metabolism; oxidative phosphorylation. Its function is as follows. C-type cytochrome. Part of the cbb3-type cytochrome c oxidase complex. FixP subunit is required for transferring electrons from donor cytochrome c via its heme groups to FixO subunit. From there, electrons are shuttled to the catalytic binuclear center of FixN subunit where oxygen reduction takes place. The complex also functions as a proton pump. In Rhizobium leguminosarum bv. viciae, this protein is Cbb3-type cytochrome c oxidase subunit FixPc.